A 33-amino-acid chain; its full sequence is Protamine TP16 (33 aa).

The interval 1-33 (MPRRRRSSSRPVRRRRRARVSRRRRRRGRRRRR) is disordered.

In terms of tissue distribution, testis.

The protein resides in the nucleus. Its subcellular location is the chromosome. Functionally, protamines substitute for histones in the chromatin of sperm during the haploid phase of spermatogenesis. They compact sperm DNA into a highly condensed, stable and inactive complex. This chain is Protamine TP16, found in Oncorhynchus mykiss (Rainbow trout).